The chain runs to 393 residues: Glutamate 5-kinase (393 aa).

K17 provides a ligand contact to ATP. Substrate contacts are provided by S57, D144, and N156. Residue 176 to 177 (SD) participates in ATP binding. A PUA domain is found at 282 to 359 (AGSIAIDAGA…AEIAAILGYA (78 aa)). Residues 374-393 (APSGARSEEGGNEKKGKLHA) are disordered. Residues 379–393 (RSEEGGNEKKGKLHA) are compositionally biased toward basic and acidic residues.

The protein belongs to the glutamate 5-kinase family.

The protein localises to the cytoplasm. It catalyses the reaction L-glutamate + ATP = L-glutamyl 5-phosphate + ADP. Its pathway is amino-acid biosynthesis; L-proline biosynthesis; L-glutamate 5-semialdehyde from L-glutamate: step 1/2. Its function is as follows. Catalyzes the transfer of a phosphate group to glutamate to form L-glutamate 5-phosphate. This is Glutamate 5-kinase from Sinorhizobium fredii (strain NBRC 101917 / NGR234).